Here is a 492-residue protein sequence, read N- to C-terminus: 3-ketoacyl-CoA synthase 5 (492 aa).

The next 2 membrane-spanning stretches (helical) occupy residues 20–40 (LINN…AIEL) and 59–79 (LLHI…YFMS). Residues 76–365 (YFMSKPRTVY…FLSSLIGRKI (290 aa)) form the FAE domain. Residues C220, H299, H383, H387, H416, and N420 contribute to the active site.

Belongs to the thiolase-like superfamily. Chalcone/stilbene synthases family. In terms of tissue distribution, expressed in siliques, flowers, leaves and seedlings.

Its subcellular location is the membrane. The catalysed reaction is a very-long-chain acyl-CoA + malonyl-CoA + H(+) = a very-long-chain 3-oxoacyl-CoA + CO2 + CoA. Its pathway is lipid metabolism; fatty acid biosynthesis. Inhibited by K3 herbicides such as alachlor, allidochlor, anilofos, cafenstrole and flufenacet. Strongly inhibited by metazachlor and mefluidide. Its function is as follows. Mediates mostly the synthesis of VLCFAs from 26 to 30 carbons in length (e.g. C20:1, C26, C28, C30). The chain is 3-ketoacyl-CoA synthase 5 from Arabidopsis thaliana (Mouse-ear cress).